The primary structure comprises 431 residues: Enolase (431 aa).

Residue Gln163 participates in (2R)-2-phosphoglycerate binding. Glu205 functions as the Proton donor in the catalytic mechanism. Positions 242, 288, and 315 each coordinate Mg(2+). (2R)-2-phosphoglycerate-binding residues include Lys340, Arg369, Ser370, and Lys391. Catalysis depends on Lys340, which acts as the Proton acceptor.

The protein belongs to the enolase family. The cofactor is Mg(2+).

Its subcellular location is the cytoplasm. It localises to the secreted. The protein localises to the cell surface. The enzyme catalyses (2R)-2-phosphoglycerate = phosphoenolpyruvate + H2O. Its pathway is carbohydrate degradation; glycolysis; pyruvate from D-glyceraldehyde 3-phosphate: step 4/5. Catalyzes the reversible conversion of 2-phosphoglycerate (2-PG) into phosphoenolpyruvate (PEP). It is essential for the degradation of carbohydrates via glycolysis. This is Enolase from Bacillus mycoides (strain KBAB4) (Bacillus weihenstephanensis).